Consider the following 204-residue polypeptide: dITP/XTP pyrophosphatase (204 aa).

Residue 8-13 coordinates substrate; the sequence is SNNAKK. The Mg(2+) site is built by E43 and D72. D72 serves as the catalytic Proton acceptor. Substrate is bound by residues S73, 155–158, K180, and 185–186; these read FGYD and HR.

It belongs to the HAM1 NTPase family. Homodimer. It depends on Mg(2+) as a cofactor.

It catalyses the reaction XTP + H2O = XMP + diphosphate + H(+). It carries out the reaction dITP + H2O = dIMP + diphosphate + H(+). The catalysed reaction is ITP + H2O = IMP + diphosphate + H(+). Functionally, pyrophosphatase that catalyzes the hydrolysis of nucleoside triphosphates to their monophosphate derivatives, with a high preference for the non-canonical purine nucleotides XTP (xanthosine triphosphate), dITP (deoxyinosine triphosphate) and ITP. Seems to function as a house-cleaning enzyme that removes non-canonical purine nucleotides from the nucleotide pool, thus preventing their incorporation into DNA/RNA and avoiding chromosomal lesions. The sequence is that of dITP/XTP pyrophosphatase from Cutibacterium acnes (strain DSM 16379 / KPA171202) (Propionibacterium acnes).